Consider the following 425-residue polypeptide: MAAAVVDPQQSVVMRVANLPLVSSTYDLVSSAYVSTKDQYPYLRSVCEMAEKGVKTVTSAAMTSALPIIQKLEPQIAVANTYACKGLDRMEERLPILNQPTSEIVASARGAVTGAKDVVTTTMAGAKDSVASTVSGVVDKTKGAVTGSVERTKSVVNGSINTVLGMVQFMNSGVDNAITKSELLVDQYFPLTQEELEMEAKKVEGFDMVQKPSNYERLESLSTKLCSRAYHQALSRVKEAKQKSQETISQLHSTVHLIEFARKNMHSANQKIQGAQDKLYVSWVEWKRSIGYDDTDESHCVEHIESRTLAIARNLTQQLQTTCQTVLVNAQGLPQNIQDQAKHLGVMAGDIYSVFRNAASFKEVSDGVLTSSKGQLQKMKESLDEVMDYFVNNTPLNWLVGPFYPQSTEVNKASLKVQQSEVKAQ.

A2 is subject to N-acetylalanine. Phosphoserine is present on S213. A Phosphotyrosine modification is found at Y230.

The protein belongs to the perilipin family. As to quaternary structure, interacts with IRGC. Post-translationally, acylated; primarily with C14, C16 and C18 fatty acids. Phosphorylation at Tyr-230 by isoform 1 of CHKA (CHKalpha2) promotes dissociation from lipid droplets: dissociation is followed by recruitment of autophagosome machinery to lipid droplets and subsequent lipid droplet lipolysis. In terms of processing, polyubiquitination of Nt-acetylatable A-PLIN2 by MARCHF6 lead to degradation by 26S proteasomes. In terms of tissue distribution, adipose tissue specific. Expressed abundantly and preferentially in fat pads.

It is found in the membrane. Its subcellular location is the lipid droplet. Its function is as follows. Structural component of lipid droplets, which is required for the formation and maintenance of lipid storage droplets. This chain is Perilipin-2, found in Mus musculus (Mouse).